We begin with the raw amino-acid sequence, 337 residues long: DNA-directed RNA polymerase subunit alpha (337 aa).

Residues 1-233 (MIQKNWQELI…DQLSIFVNFE (233 aa)) are alpha N-terminal domain (alpha-NTD). The alpha C-terminal domain (alpha-CTD) stretch occupies residues 249-337 (FNPALLKKVD…DLAKRYEDQY (89 aa)).

The protein belongs to the RNA polymerase alpha chain family. Homodimer. The RNAP catalytic core consists of 2 alpha, 1 beta, 1 beta' and 1 omega subunit. When a sigma factor is associated with the core the holoenzyme is formed, which can initiate transcription.

It carries out the reaction RNA(n) + a ribonucleoside 5'-triphosphate = RNA(n+1) + diphosphate. DNA-dependent RNA polymerase catalyzes the transcription of DNA into RNA using the four ribonucleoside triphosphates as substrates. The polypeptide is DNA-directed RNA polymerase subunit alpha (Brucella ovis (strain ATCC 25840 / 63/290 / NCTC 10512)).